We begin with the raw amino-acid sequence, 367 residues long: Apolipoprotein A-V (367 aa).

The first 20 residues, 1-20 (MVAVLTWALALLSAFATAQT), serve as a signal peptide directing secretion. A Phosphoserine modification is found at Ser56.

It belongs to the apolipoprotein A1/A4/E family. Interacts with GPIHBP1. Interacts with SORL1; this interaction leads to APOA5 internalization and sorting either to lysosomes and degradation, or to the trans-Golgi network. In terms of processing, phosphorylated by FAM20C in the extracellular medium.

The protein localises to the secreted. It localises to the early endosome. It is found in the late endosome. Its subcellular location is the golgi apparatus. The protein resides in the trans-Golgi network. In terms of biological role, minor apolipoprotein mainly associated with HDL and to a lesser extent with VLDL. May also be associated with chylomicrons. Important determinant of plasma triglyceride (TG) levels by both being a potent stimulator of apo-CII lipoprotein lipase (LPL) TG hydrolysis and an inhibitor of the hepatic VLDL-TG production rate (without affecting the VLDL-apoB production rate). Activates poorly lecithin:cholesterol acyltransferase (LCAT) and does not enhance efflux of cholesterol from macrophages. Binds heparin. The polypeptide is Apolipoprotein A-V (APOA5) (Phoca vitulina (Harbor seal)).